A 467-amino-acid chain; its full sequence is Fumarate hydratase class II (467 aa).

Substrate is bound by residues 99-101 (SGT), 130-133 (HPND), 140-142 (SSN), and T188. H189 serves as the catalytic Proton donor/acceptor. S319 is an active-site residue. Substrate is bound by residues S320 and 325–327 (KVN).

It belongs to the class-II fumarase/aspartase family. Fumarase subfamily. In terms of assembly, homotetramer.

It is found in the cytoplasm. The enzyme catalyses (S)-malate = fumarate + H2O. The protein operates within carbohydrate metabolism; tricarboxylic acid cycle; (S)-malate from fumarate: step 1/1. In terms of biological role, involved in the TCA cycle. Catalyzes the stereospecific interconversion of fumarate to L-malate. The polypeptide is Fumarate hydratase class II (Thermosynechococcus vestitus (strain NIES-2133 / IAM M-273 / BP-1)).